We begin with the raw amino-acid sequence, 118 residues long: uncharacterized protein (118 aa).

The interval 25–85 (AEQPGSGGIA…SSSSTPSRAR (61 aa)) is disordered. Residues 71 to 83 (RPSASSSSSTPSR) show a composition bias toward low complexity.

This is an uncharacterized protein from Azospirillum brasilense.